The following is a 155-amino-acid chain: MADLRQLMDNEVLMAFTSYATIILTKMMFMSSATAFQRITNKVFANPEDCAGFGKGENAKKFVRTDEKVERVRRAHLNDLENIVPFLGIGLLYSLSGPDLSTALMHFRIFVGARIYHTIAYLTPLPQPNRGLAFFVGYGVTLSMAYRLLRSRLYL.

Residues Asp3–Asp9 lie on the Lumenal side of the membrane. Residues Asn10–Ala33 form a helical membrane-spanning segment. Residues Thr34–Phe62 are Cytoplasmic-facing. A glutathione-binding site is contributed by Arg38. N6-acetyllysine occurs at positions 42, 55, and 60. A helical transmembrane segment spans residues Val63 to Ser96. Glutathione-binding residues include Arg73, Arg74, His76, and Glu81. Residues Gly97 to Asp99 are Lumenal-facing. The chain crosses the membrane as a helical span at residues Leu100–Thr123. Residue Tyr121 coordinates glutathione. At Pro124–Pro128 the chain is on the cytoplasmic side. A helical transmembrane segment spans residues Asn129–Leu148. Residues Leu149 to Leu155 are Lumenal-facing.

It belongs to the MAPEG family. As to quaternary structure, homotrimer; The trimer binds only one molecule of glutathione. Post-translationally, acetylation of Lys-42 and Lys-55 is observed in liver mitochondria from fasted mice but not from fed mice. As to expression, expressed in the testes (at protein level).

The protein resides in the endoplasmic reticulum membrane. Its subcellular location is the mitochondrion outer membrane. The catalysed reaction is RX + glutathione = an S-substituted glutathione + a halide anion + H(+). Conjugation of reduced glutathione to a wide number of exogenous and endogenous hydrophobic electrophiles. The protein is Microsomal glutathione S-transferase 1 (Mgst1) of Mus musculus (Mouse).